A 120-amino-acid polypeptide reads, in one-letter code: Ribonuclease P protein component 4 (120 aa).

Residues Cys-67, Cys-70, Cys-96, and Cys-99 each contribute to the Zn(2+) site.

This sequence belongs to the eukaryotic/archaeal RNase P protein component 4 family. As to quaternary structure, consists of a catalytic RNA component and at least 4-5 protein subunits. Zn(2+) serves as cofactor.

It is found in the cytoplasm. The catalysed reaction is Endonucleolytic cleavage of RNA, removing 5'-extranucleotides from tRNA precursor.. Functionally, part of ribonuclease P, a protein complex that generates mature tRNA molecules by cleaving their 5'-ends. The polypeptide is Ribonuclease P protein component 4 (Thermococcus sibiricus (strain DSM 12597 / MM 739)).